A 574-amino-acid chain; its full sequence is Sorting nexin-33 (574 aa).

One can recognise an SH3 domain in the interval 1–61 (MALKGRALYD…PASYVEIVRP (61 aa)). The residue at position 77 (serine 77) is a Phosphoserine. Polar residues predominate over residues 79–90 (GTQGSLYSSPSM). A disordered region spans residues 79–116 (GTQGSLYSSPSMASPARSGGGSGFLSNPGSFEDDDDDD). Serine 92 carries the post-translational modification Phosphoserine. Residues 230–340 (FACSIEDPTK…HFLSCLDDKQ (111 aa)) enclose the PX domain. In terms of domain architecture, BAR spans 371-574 (LQDVEDRVDT…EKTLHMYDHL (204 aa)).

The protein belongs to the sorting nexin family. As to quaternary structure, homodimer (via BAR domain). Interacts with ADAM15. Interacts with FASLG. Interacts (via SH3 domain) with DNM1 and DNM2. Interacts with WASL. Interacts with FCHSD1 (via the F-BAR domain). In terms of processing, phosphorylated. As to expression, detected in brain (at protein level).

The protein localises to the cytoplasm. It localises to the cytosol. It is found in the membrane. The protein resides in the cytoplasmic vesicle membrane. Functionally, plays a role in the reorganization of the cytoskeleton, endocytosis and cellular vesicle trafficking via its interactions with membranes, WASL, DNM1 and DNM2. Acts both during interphase and at the end of mitotic cell divisions. Required for efficient progress through mitosis and cytokinesis. Required for normal formation of the cleavage furrow at the end of mitosis. Modulates endocytosis of cell-surface proteins, such as APP and PRNP; this then modulates the secretion of APP and PRNP peptides. Promotes membrane tubulation (in vitro). May promote the formation of macropinosomes. The polypeptide is Sorting nexin-33 (Snx33) (Mus musculus (Mouse)).